Reading from the N-terminus, the 642-residue chain is Threonine--tRNA ligase (642 aa).

The TGS domain maps to 1 to 61; the sequence is MPVITLPDGS…ENDAQLSIIT (61 aa). Residues 243-534 are catalytic; that stretch reads DHRKIGKQLD…LTEEFAGFFP (292 aa). At Lys286 the chain carries N6-acetyllysine. 3 residues coordinate Zn(2+): Cys334, His385, and His511.

It belongs to the class-II aminoacyl-tRNA synthetase family. Homodimer. The cofactor is Zn(2+).

The protein localises to the cytoplasm. It catalyses the reaction tRNA(Thr) + L-threonine + ATP = L-threonyl-tRNA(Thr) + AMP + diphosphate + H(+). Catalyzes the attachment of threonine to tRNA(Thr) in a two-step reaction: L-threonine is first activated by ATP to form Thr-AMP and then transferred to the acceptor end of tRNA(Thr). Also edits incorrectly charged L-seryl-tRNA(Thr). This is Threonine--tRNA ligase from Escherichia coli O157:H7.